We begin with the raw amino-acid sequence, 148 residues long: Lipoprotein MlpH (148 aa).

Residues 1–17 (MKIINILFCLFLLMLNG) form the signal peptide. A lipid anchor (N-palmitoyl cysteine) is attached at Cys-18. A lipid anchor (S-diacylglycerol cysteine) is attached at Cys-18. The tract at residues 26-61 (LKNNAQQTKSRRKRDLTQKEVTQEKPKSKEELLREK) is disordered. A compositionally biased stretch (basic and acidic residues) spans 40–61 (DLTQKEVTQEKPKSKEELLREK).

The protein belongs to the Multicopy lipoprotein (Mlp) family.

Its subcellular location is the cell outer membrane. In terms of biological role, an outer membrane protein that may participate in pathogenesis. Some human Lyme disease patients have antibodies against this protein. The Mlp proteins probably undergo intragenic recombination, generating new alleles. The chain is Lipoprotein MlpH from Borreliella burgdorferi (strain ATCC 35210 / DSM 4680 / CIP 102532 / B31) (Borrelia burgdorferi).